The following is a 165-amino-acid chain: NADPH-dependent 7-cyano-7-deazaguanine reductase (165 aa).

Cys-56 serves as the catalytic Thioimide intermediate. Asp-63 acts as the Proton donor in catalysis. Substrate contacts are provided by residues Val-78–Ser-80 and His-97–Glu-98.

Belongs to the GTP cyclohydrolase I family. QueF type 1 subfamily.

It is found in the cytoplasm. It catalyses the reaction 7-aminomethyl-7-carbaguanine + 2 NADP(+) = 7-cyano-7-deazaguanine + 2 NADPH + 3 H(+). It functions in the pathway tRNA modification; tRNA-queuosine biosynthesis. Catalyzes the NADPH-dependent reduction of 7-cyano-7-deazaguanine (preQ0) to 7-aminomethyl-7-deazaguanine (preQ1). In Bacillus pumilus (strain SAFR-032), this protein is NADPH-dependent 7-cyano-7-deazaguanine reductase.